The chain runs to 306 residues: Glutathione transport system permease protein GsiC (306 aa).

Residues 1–8 (MLNYVIKR) are Cytoplasmic-facing. Residues 9–29 (LLGLIPTLFIVSVLVFLFVHM) form a helical membrane-spanning segment. Topologically, residues 30–102 (LPGDPARLIA…SRFMPTLWLT (73 aa)) are periplasmic. One can recognise an ABC transmembrane type-1 domain in the interval 95–292 (FMPTLWLTIT…LEFILINLVV (198 aa)). The chain crosses the membrane as a helical span at residues 103–123 (ITSMVWAVIFGMAAGIIAAVW). Topologically, residues 124 to 134 (RNRWPDRLSMT) are cytoplasmic. A helical transmembrane segment spans residues 135-155 (IAVSGISFPAFALGMLLIQVF). Over 156–168 (SVELGWLPTVGAD) the chain is Periplasmic. The helical transmembrane segment at 169-189 (SWQHYILSSLTLGAAVAAVMA) threads the bilayer. Residues 190-228 (RFTRASFVDVLSEDYMRTARAKGVSETWVVLKHGLRNAM) are Cytoplasmic-facing. Residues 229–249 (IPVVTMMGLQFGFLLGGSIVV) form a helical membrane-spanning segment. At 250–277 (EKVFNWPGLGRLLVDSVEMRDYPVIQAE) the chain is on the periplasmic side. The helical transmembrane segment at 278-298 (ILLFSLEFILINLVVDVLYAA) threads the bilayer. Residues 299 to 306 (INPAIRYK) are Cytoplasmic-facing.

The protein belongs to the binding-protein-dependent transport system permease family. In terms of assembly, the complex is composed of two ATP-binding proteins (GsiA), two transmembrane proteins (GsiC and GsiD) and a solute-binding protein (GsiB).

The protein resides in the cell inner membrane. In terms of biological role, part of the ABC transporter complex GsiABCD involved in glutathione import. Probably responsible for the translocation of the substrate across the membrane. In Shigella boydii serotype 4 (strain Sb227), this protein is Glutathione transport system permease protein GsiC.